The chain runs to 423 residues: NDP-N-acetyl-D-galactosaminuronic acid dehydrogenase (423 aa).

11-28 is an NAD(+) binding site; sequence TISVVGLGYIGLPTATVL. The active-site Proton donor/acceptor is the K218. Residue C272 is the Nucleophile of the active site.

The protein belongs to the UDP-glucose/GDP-mannose dehydrogenase family.

Its function is as follows. Probably involved in the synthesis of sugar components of EPS I, by converting NDP-N-acetyl-D-galactosamine into NDP-N-acetyl-D-galactosaminuronic acid. This chain is NDP-N-acetyl-D-galactosaminuronic acid dehydrogenase (epsD), found in Ralstonia nicotianae (strain ATCC BAA-1114 / GMI1000) (Ralstonia solanacearum).